We begin with the raw amino-acid sequence, 250 residues long: ATP synthase subunit a (250 aa).

6 helical membrane-spanning segments follow: residues 26 to 46, 84 to 104, 114 to 134, 143 to 163, 193 to 213, and 216 to 236; these read FTNA…FLYF, FFPL…LGMF, IIVT…YGFY, VFVP…IEII, FVAS…LPLI, and VALT…FAVL.

The protein belongs to the ATPase A chain family. In terms of assembly, F-type ATPases have 2 components, CF(1) - the catalytic core - and CF(0) - the membrane proton channel. CF(1) has five subunits: alpha(3), beta(3), gamma(1), delta(1), epsilon(1). CF(0) has three main subunits: a(1), b(2) and c(9-12). The alpha and beta chains form an alternating ring which encloses part of the gamma chain. CF(1) is attached to CF(0) by a central stalk formed by the gamma and epsilon chains, while a peripheral stalk is formed by the delta and b chains.

Its subcellular location is the cell inner membrane. Key component of the proton channel; it plays a direct role in the translocation of protons across the membrane. The protein is ATP synthase subunit a of Rhizobium etli (strain ATCC 51251 / DSM 11541 / JCM 21823 / NBRC 15573 / CFN 42).